Here is a 142-residue protein sequence, read N- to C-terminus: Large ribosomal subunit protein uL13 (142 aa).

The protein belongs to the universal ribosomal protein uL13 family. As to quaternary structure, part of the 50S ribosomal subunit.

Its function is as follows. This protein is one of the early assembly proteins of the 50S ribosomal subunit, although it is not seen to bind rRNA by itself. It is important during the early stages of 50S assembly. The chain is Large ribosomal subunit protein uL13 from Treponema denticola (strain ATCC 35405 / DSM 14222 / CIP 103919 / JCM 8153 / KCTC 15104).